The chain runs to 269 residues: uncharacterized protein (269 aa).

Residues 3–105 (WIINDNIEFW…VPRRGFKIHN (103 aa)) constitute a DNA-binding region (ompR/PhoB-type).

To V.cholerae cholera toxin transcriptional activator (ToxR).

This is an uncharacterized protein from Escherichia coli (strain K12).